The following is a 277-amino-acid chain: Bifunctional protein FolD 1 (277 aa).

Residues 162–164 (GDS) and serine 187 each bind NADP(+).

It belongs to the tetrahydrofolate dehydrogenase/cyclohydrolase family. Homodimer.

The enzyme catalyses (6R)-5,10-methylene-5,6,7,8-tetrahydrofolate + NADP(+) = (6R)-5,10-methenyltetrahydrofolate + NADPH. The catalysed reaction is (6R)-5,10-methenyltetrahydrofolate + H2O = (6R)-10-formyltetrahydrofolate + H(+). It participates in one-carbon metabolism; tetrahydrofolate interconversion. Functionally, catalyzes the oxidation of 5,10-methylenetetrahydrofolate to 5,10-methenyltetrahydrofolate and then the hydrolysis of 5,10-methenyltetrahydrofolate to 10-formyltetrahydrofolate. The protein is Bifunctional protein FolD 1 of Syntrophomonas wolfei subsp. wolfei (strain DSM 2245B / Goettingen).